The following is a 397-amino-acid chain: Elongation factor Tu 1 (397 aa).

Positions 10–206 constitute a tr-type G domain; it reads KPHVNIGTIG…AIDTWIPEPV (197 aa). The segment at 19–26 is G1; the sequence is GHVDHGKT. Position 19 to 26 (19 to 26) interacts with GTP; that stretch reads GHVDHGKT. Residue T26 participates in Mg(2+) binding. Residues 61–65 form a G2 region; that stretch reads GITIS. The interval 82–85 is G3; the sequence is DCPG. GTP is bound by residues 82–86 and 137–140; these read DCPGH and NKCD. A G4 region spans residues 137 to 140; that stretch reads NKCD. The interval 175–177 is G5; sequence SAL.

This sequence belongs to the TRAFAC class translation factor GTPase superfamily. Classic translation factor GTPase family. EF-Tu/EF-1A subfamily. As to quaternary structure, monomer.

It is found in the cytoplasm. The catalysed reaction is GTP + H2O = GDP + phosphate + H(+). GTP hydrolase that promotes the GTP-dependent binding of aminoacyl-tRNA to the A-site of ribosomes during protein biosynthesis. The chain is Elongation factor Tu 1 from Alkaliphilus metalliredigens (strain QYMF).